The following is a 279-amino-acid chain: Protein BASIC PENTACYSTEINE2 (279 aa).

Residues Thr-126–Pro-167 are disordered. Low complexity predominate over residues Ser-152 to Asn-161.

The protein belongs to the BBR/BPC family. In terms of tissue distribution, expressed in seedlings, leaves and pistils. Detected in the base of flowers and tips of carpels, in sepal and petal vasculature, in pollen grains, in young rosette, in the lateral and tip of primary roots, and in ovule at the exception of the outer integument.

The protein resides in the nucleus. Functionally, transcriptional regulator that specifically binds to GA-rich elements (GAGA-repeats) present in regulatory sequences of genes involved in developmental processes. The polypeptide is Protein BASIC PENTACYSTEINE2 (Arabidopsis thaliana (Mouse-ear cress)).